The following is a 487-amino-acid chain: Zinc finger and BTB domain-containing protein 32 (487 aa).

The BTB domain occupies 29–87; the sequence is CDTLITVGSQEFPAHSLVLAGVSQQLGRRGQWALGEGISPSTFAQLLNFVYGESVELQP. Basic and acidic residues predominate over residues 112–166; the sequence is ARGDRAKKPDPGLKKHQEEPEKPSRNPERELGDPGEKQKPEQVSRTGGREQEMLH. 2 disordered regions span residues 112–244 and 308–371; these read ARGD…TSVT and QNQL…ARSR. A compositionally biased stretch (polar residues) spans 308–320; the sequence is QNQLASSSPTPGS. A compositionally biased stretch (pro residues) spans 357–369; that stretch reads PPRPHPPPAPPAR. 3 consecutive C2H2-type zinc fingers follow at residues 373-395, 401-423, and 428-450; these read YACS…YRVH, FSCS…LRTH, and YRCS…MRGH. The disordered stretch occupies residues 468 to 487; it reads SSSRPSRPSTSPCCPSSSTT.

The protein belongs to the krueppel C2H2-type zinc-finger protein family. Homodimer (via PTB domain). Interacts with the N-terminal of FANCC. Interacts with ZBTB16. Interacts with GATA3. As to expression, predominantly expressed in testis. Some isoforms are ubiquitously expressed.

The protein resides in the nucleus. Functionally, DNA-binding protein that binds to the to a 5'-TGTACAGTGT-3' core sequence. May function as a transcriptional transactivator and transcriptional repressor. Probably exerts its repressor effect by preventing GATA3 from binding to DNA. May play a role in regulating the differentiation and activation of helper T-cells. The polypeptide is Zinc finger and BTB domain-containing protein 32 (ZBTB32) (Homo sapiens (Human)).